We begin with the raw amino-acid sequence, 258 residues long: Type II restriction enzyme HindII (258 aa).

The enzyme catalyses Endonucleolytic cleavage of DNA to give specific double-stranded fragments with terminal 5'-phosphates.. Functionally, a P subtype restriction enzyme that recognizes the double-stranded sequence 5'-GTYRAC-3' and cleaves after Y-3. The polypeptide is Type II restriction enzyme HindII (hindIIR) (Haemophilus influenzae (strain ATCC 51907 / DSM 11121 / KW20 / Rd)).